The primary structure comprises 88 residues: Phosphocarrier protein HPr (88 aa).

An HPr domain is found at 1–88 (MEKREFNIIA…DTMKKEGLAE (88 aa)). His-15 acts as the Pros-phosphohistidine intermediate in catalysis. Ser-46 is modified (phosphoserine; by HPrK/P).

The protein belongs to the HPr family.

It is found in the cytoplasm. Phosphorylation on Ser-46 inhibits the phosphoryl transfer from enzyme I to HPr. Its function is as follows. General (non sugar-specific) component of the phosphoenolpyruvate-dependent sugar phosphotransferase system (sugar PTS). This major carbohydrate active-transport system catalyzes the phosphorylation of incoming sugar substrates concomitantly with their translocation across the cell membrane. The phosphoryl group from phosphoenolpyruvate (PEP) is transferred to the phosphoryl carrier protein HPr by enzyme I. Phospho-HPr then transfers it to the PTS EIIA domain. P-Ser-HPr interacts with the catabolite control protein A (CcpA), forming a complex that binds to DNA at the catabolite response elements cre, operator sites preceding a large number of catabolite-regulated genes. Thus, P-Ser-HPr is a corepressor in carbon catabolite repression (CCR), a mechanism that allows bacteria to coordinate and optimize the utilization of available carbon sources. P-Ser-HPr also plays a role in inducer exclusion, in which it probably interacts with several non-PTS permeases and inhibits their transport activity. The polypeptide is Phosphocarrier protein HPr (ptsH) (Lacticaseibacillus casei (Lactobacillus casei)).